Here is a 681-residue protein sequence, read N- to C-terminus: GAS2-like protein 1 (681 aa).

Position 2 is an N-acetylalanine (Ala2). The Calponin-homology (CH) domain occupies 27 to 148; it reads EAMKEDLAEW…CLLEVARRGA (122 aa). Disordered stretches follow at residues 168–204, 278–509, and 536–681; these read LRAAPPAPNAPAAGEDTTETAPAPGTPARGPRMTPSD, STAH…PLQL, and ASVT…DSWM. The span at 186-199 shows a compositional bias: low complexity; sequence ETAPAPGTPARGPR. A Phosphothreonine modification is found at Thr193. Positions 203-275 constitute a GAR domain; sequence SDLRNLDELV…HYLDKHDPCR (73 aa). The segment covering 291–303 has biased composition (polar residues); the sequence is FSPQRVSPTTSPR. Ser306 and Ser316 each carry phosphoserine. A compositionally biased stretch (basic and acidic residues) spans 327 to 342; that stretch reads STKEGPETPPRPRDQL. Thr334 bears the Phosphothreonine mark. Residues Ser352 and Ser355 each carry the phosphoserine modification. Low complexity predominate over residues 354–365; the sequence is DSDSSASSAQSG. Residues 370–381 show a composition bias toward basic and acidic residues; that stretch reads RSDDTGTGPRRE. Phosphothreonine is present on Thr391. Ser394 carries the phosphoserine modification. A compositionally biased stretch (basic and acidic residues) spans 404 to 413; the sequence is QSRDRLDRGR. 4 positions are modified to phosphoserine: Ser436, Ser438, Ser479, and Ser486. Over residues 437 to 454 the composition is skewed to basic and acidic residues; it reads QSREEQAVLLVRRDRDGQ. A compositionally biased stretch (low complexity) spans 475–493; that stretch reads PRARSPAAPRLSRVSSPSP. At Arg487 the chain carries Omega-N-methylarginine. Phosphoserine occurs at positions 490 and 492. The residue at position 498 (Thr498) is a Phosphothreonine. An Omega-N-methylarginine modification is found at Arg504. Pro residues predominate over residues 542-556; sequence GPVPDPARAPDPPAP. A compositionally biased stretch (low complexity) spans 557 to 571; sequence DSAYCSSSSSSSSLS. Arg633 bears the Omega-N-methylarginine mark. A compositionally biased stretch (basic and acidic residues) spans 634 to 644; it reads GRMDTQPDRKP. Position 657 is a phosphoserine (Ser657).

The protein belongs to the GAS2 family. As to quaternary structure, interacts with MAPRE1.

The protein localises to the cytoplasm. Its subcellular location is the cytoskeleton. It is found in the stress fiber. Its function is as follows. Involved in the cross-linking of microtubules and microfilaments. Regulates microtubule dynamics and stability by interacting with microtubule plus-end tracking proteins, such as MAPRE1, to regulate microtubule growth along actin stress fibers. This Homo sapiens (Human) protein is GAS2-like protein 1 (GAS2L1).